The chain runs to 305 residues: N-acyl-aromatic-L-amino acid amidohydrolase (carboxylate-forming) (305 aa).

Zn(2+) contacts are provided by histidine 15 and glutamate 18. Substrate contacts are provided by residues arginine 57 and asparagine 64–arginine 65. Position 108 (histidine 108) interacts with Zn(2+). 2 residues coordinate substrate: glutamate 171 and tyrosine 281.

This sequence belongs to the AspA/AstE family. Aspartoacylase subfamily. As to quaternary structure, homotetramer. The cofactor is Zn(2+).

The protein localises to the apical cell membrane. It localises to the cytoplasm. It catalyses the reaction an N-acyl-aromatic L-alpha-amino acid + H2O = an aromatic L-alpha-amino acid + a carboxylate. The enzyme catalyses an N-acetyl-L-cysteine-S-conjugate + H2O = an S-substituted L-cysteine + acetate. Plays an important role in deacetylating mercapturic acids in kidney proximal tubules. The chain is N-acyl-aromatic-L-amino acid amidohydrolase (carboxylate-forming) (acy3) from Xenopus laevis (African clawed frog).